A 684-amino-acid chain; its full sequence is Galactocerebrosidase (684 aa).

The N-terminal stretch at Met-1–Ala-42 is a signal peptide. Substrate is bound by residues Thr-109, Trp-151, and Asn-197. The active-site Proton donor/acceptor is the Glu-198. Glu-274 serves as the catalytic Nucleophile. Residues Cys-287 and Cys-394 are joined by a disulfide bond. 2 N-linked (GlcNAc...) asparagine glycosylation sites follow: Asn-300 and Asn-379. Arg-396 contacts substrate. N-linked (GlcNAc...) asparagine glycosylation is found at Asn-403, Asn-558, Asn-601, and Asn-645.

This sequence belongs to the glycosyl hydrolase 59 family. Detected in brain and kidney.

It is found in the lysosome. It carries out the reaction a beta-D-galactosyl-(1&lt;-&gt;1')-N-acylsphing-4-enine + H2O = an N-acylsphing-4-enine + D-galactose. The enzyme catalyses a D-galactosylceramide + H2O = an N-acyl-sphingoid base + D-galactose. The catalysed reaction is beta-D-galactosyl-(1&lt;-&gt;1)-sphing-4-enine + H2O = sphing-4-enine + D-galactose. Functionally, hydrolyzes the galactose ester bonds of glycolipids such as galactosylceramide and galactosylsphingosine. Enzyme with very low activity responsible for the lysosomal catabolism of galactosylceramide, a major lipid in myelin, kidney and epithelial cells of small intestine and colon. This Mus musculus (Mouse) protein is Galactocerebrosidase.